We begin with the raw amino-acid sequence, 278 residues long: Ankyrin repeat and SOCS box protein 13 (278 aa).

6 ANK repeats span residues 18–47 (VERT…CVNQ), 51–80 (DSIT…QVDA), 84–113 (DGST…KVNP), 116–145 (YTAS…NLEA), 149–178 (HFGT…NVNA), and 181–210 (LHET…NIYA). Residues 229-278 (AKCFEYYEKTPLTLSQLCRVNLRKATGVRGLEKIAKLNIPPRLIDYLSYN) form the SOCS box domain.

Belongs to the ankyrin SOCS box (ASB) family.

It participates in protein modification; protein ubiquitination. In terms of biological role, may be a substrate-recognition component of a SCF-like ECS (Elongin-Cullin-SOCS-box protein) E3 ubiquitin-protein ligase complex which mediates the ubiquitination and subsequent proteasomal degradation of target proteins. The protein is Ankyrin repeat and SOCS box protein 13 (ASB13) of Homo sapiens (Human).